Consider the following 150-residue polypeptide: MGRVRLASQRHRVRIAALQILFEVDETDHAIDQVLERRLTDEPMSAESAEFLRRLVFGTWEHRSYLDRIIEEAAPNWPVNQMPGVDKAVLRIALFELLIDEVEKTPIKAVINEAVELAKEFGSDNSSRFVNGVLGTVVTRYLAEREANEE.

This sequence belongs to the NusB family.

In terms of biological role, involved in transcription antitermination. Required for transcription of ribosomal RNA (rRNA) genes. Binds specifically to the boxA antiterminator sequence of the ribosomal RNA (rrn) operons. The chain is Transcription antitermination protein NusB from Chloroflexus aggregans (strain MD-66 / DSM 9485).